A 268-amino-acid polypeptide reads, in one-letter code: 4-hydroxy-tetrahydrodipicolinate reductase (268 aa).

8 to 13 lines the NAD(+) pocket; the sequence is GAAGRM. Arg36 serves as a coordination point for NADP(+). NAD(+) is bound by residues 99–101 and 123–126; these read GTT and AANF. His156 functions as the Proton donor/acceptor in the catalytic mechanism. Residue His157 participates in (S)-2,3,4,5-tetrahydrodipicolinate binding. The active-site Proton donor is the Lys160. A (S)-2,3,4,5-tetrahydrodipicolinate-binding site is contributed by 166-167; the sequence is GT.

Belongs to the DapB family.

Its subcellular location is the cytoplasm. The enzyme catalyses (S)-2,3,4,5-tetrahydrodipicolinate + NAD(+) + H2O = (2S,4S)-4-hydroxy-2,3,4,5-tetrahydrodipicolinate + NADH + H(+). It carries out the reaction (S)-2,3,4,5-tetrahydrodipicolinate + NADP(+) + H2O = (2S,4S)-4-hydroxy-2,3,4,5-tetrahydrodipicolinate + NADPH + H(+). It participates in amino-acid biosynthesis; L-lysine biosynthesis via DAP pathway; (S)-tetrahydrodipicolinate from L-aspartate: step 4/4. Its function is as follows. Catalyzes the conversion of 4-hydroxy-tetrahydrodipicolinate (HTPA) to tetrahydrodipicolinate. The chain is 4-hydroxy-tetrahydrodipicolinate reductase from Pseudomonas fluorescens (strain SBW25).